The sequence spans 421 residues: MGGVKDKFLVKGGARLQGSVRVDGAKNSVLKLMAAALLAEGTTTLTNCPEILDVPLMRDVLVGLGCEVEIDGHTVTIHTPAELKSDADFPAVTQFRASVCVLGPLTARCGRAVVSLPGGDAIGSRPLDMHQSGLEQLGATTRTQHGAVVAEADKLVGAEISLDFPSVGATENILMASVMAEGQTTLDNAAREPEIVDLCRMLRSMGADIEGEGSPKITINGVEKLHPTSHEVIGDRIVAGTWAFAAAMTRGDVTVGGIAPRYLHLPLEKLKLAGAQVDTFENGFRVVMNKRPKSTDYQTLPFPGFPTDLQPMAIGLNAIADGVAVVTENVFESRFRFVDEMQRLGADTSVDGHHVVIRGIEELSSTTVWSSDIRAGAGLVIAALCAEGTTEVRDVFHIDRGYPNFVENLQALGADIQRVVA.

Lysine 26–asparagine 27 serves as a coordination point for phosphoenolpyruvate. Residue arginine 96 coordinates UDP-N-acetyl-alpha-D-glucosamine. Residue aspartate 120 is the Proton donor of the active site. UDP-N-acetyl-alpha-D-glucosamine-binding residues include aspartate 308 and valine 330.

This sequence belongs to the EPSP synthase family. MurA subfamily.

It is found in the cytoplasm. It catalyses the reaction phosphoenolpyruvate + UDP-N-acetyl-alpha-D-glucosamine = UDP-N-acetyl-3-O-(1-carboxyvinyl)-alpha-D-glucosamine + phosphate. It participates in cell wall biogenesis; peptidoglycan biosynthesis. Functionally, cell wall formation. Adds enolpyruvyl to UDP-N-acetylglucosamine. This is UDP-N-acetylglucosamine 1-carboxyvinyltransferase from Corynebacterium efficiens (strain DSM 44549 / YS-314 / AJ 12310 / JCM 11189 / NBRC 100395).